We begin with the raw amino-acid sequence, 296 residues long: Phosphatidylserine decarboxylase proenzyme (296 aa).

Catalysis depends on charge relay system; for autoendoproteolytic cleavage activity residues aspartate 113, histidine 169, and serine 256. The active-site Schiff-base intermediate with substrate; via pyruvic acid; for decarboxylase activity is the serine 256. Serine 256 carries the pyruvic acid (Ser); by autocatalysis modification.

Belongs to the phosphatidylserine decarboxylase family. PSD-B subfamily. Prokaryotic type II sub-subfamily. As to quaternary structure, heterodimer of a large membrane-associated beta subunit and a small pyruvoyl-containing alpha subunit. It depends on pyruvate as a cofactor. Is synthesized initially as an inactive proenzyme. Formation of the active enzyme involves a self-maturation process in which the active site pyruvoyl group is generated from an internal serine residue via an autocatalytic post-translational modification. Two non-identical subunits are generated from the proenzyme in this reaction, and the pyruvate is formed at the N-terminus of the alpha chain, which is derived from the carboxyl end of the proenzyme. The autoendoproteolytic cleavage occurs by a canonical serine protease mechanism, in which the side chain hydroxyl group of the serine supplies its oxygen atom to form the C-terminus of the beta chain, while the remainder of the serine residue undergoes an oxidative deamination to produce ammonia and the pyruvoyl prosthetic group on the alpha chain. During this reaction, the Ser that is part of the protease active site of the proenzyme becomes the pyruvoyl prosthetic group, which constitutes an essential element of the active site of the mature decarboxylase.

It localises to the cell membrane. It carries out the reaction a 1,2-diacyl-sn-glycero-3-phospho-L-serine + H(+) = a 1,2-diacyl-sn-glycero-3-phosphoethanolamine + CO2. It functions in the pathway phospholipid metabolism; phosphatidylethanolamine biosynthesis; phosphatidylethanolamine from CDP-diacylglycerol: step 2/2. Catalyzes the formation of phosphatidylethanolamine (PtdEtn) from phosphatidylserine (PtdSer). This Clostridium beijerinckii (strain ATCC 51743 / NCIMB 8052) (Clostridium acetobutylicum) protein is Phosphatidylserine decarboxylase proenzyme.